A 272-amino-acid chain; its full sequence is Urease accessory protein UreD (272 aa).

The protein belongs to the UreD family. UreD, UreF and UreG form a complex that acts as a GTP-hydrolysis-dependent molecular chaperone, activating the urease apoprotein by helping to assemble the nickel containing metallocenter of UreC. The UreE protein probably delivers the nickel.

The protein localises to the cytoplasm. Required for maturation of urease via the functional incorporation of the urease nickel metallocenter. The chain is Urease accessory protein UreD from Opitutus terrae (strain DSM 11246 / JCM 15787 / PB90-1).